The sequence spans 185 residues: Large ribosomal subunit protein bL25 (185 aa).

Belongs to the bacterial ribosomal protein bL25 family. CTC subfamily. Part of the 50S ribosomal subunit; part of the 5S rRNA/L5/L18/L25 subcomplex. Contacts the 5S rRNA. Binds to the 5S rRNA independently of L5 and L18.

Functionally, this is one of the proteins that binds to the 5S RNA in the ribosome where it forms part of the central protuberance. The chain is Large ribosomal subunit protein bL25 from Laribacter hongkongensis (strain HLHK9).